We begin with the raw amino-acid sequence, 403 residues long: Large ribosomal subunit protein uL3 (403 aa).

The tract at residues 1–37 (MSHRKFSAPRHGSLGFLPRKRSSRHRGKVKSFPKDDP) is disordered. A Phosphoserine modification is found at serine 13. Positions 18 to 31 (PRKRSSRHRGKVKS) are enriched in basic residues. Lysine 39 is covalently cross-linked (Glycyl lysine isopeptide (Lys-Gly) (interchain with G-Cter in SUMO2)). N6-acetyllysine is present on lysine 136. Glycyl lysine isopeptide (Lys-Gly) (interchain with G-Cter in SUMO2) cross-links involve residues lysine 224 and lysine 226. Histidine 245 is subject to Tele-methylhistidine. An N6-acetyllysine; alternate mark is found at lysine 286 and lysine 294. A Glycyl lysine isopeptide (Lys-Gly) (interchain with G-Cter in SUMO2); alternate cross-link involves residue lysine 286. Residue lysine 294 forms a Glycyl lysine isopeptide (Lys-Gly) (interchain with G-Cter in SUMO1); alternate linkage. Serine 304 is subject to Phosphoserine. An N6-acetyllysine; alternate modification is found at lysine 366. Residue lysine 366 forms a Glycyl lysine isopeptide (Lys-Gly) (interchain with G-Cter in SUMO2); alternate linkage. Lysine 373 carries the N6-acetyllysine modification. Glycyl lysine isopeptide (Lys-Gly) (interchain with G-Cter in SUMO2) cross-links involve residues lysine 386, lysine 393, and lysine 399.

Belongs to the universal ribosomal protein uL3 family. Component of the large ribosomal subunit. Interacts with DHX33. In terms of processing, constitutively monomethylated at His-245 by METTL18. Methylation at His-245 regulates translation elongation by slowing ribosome traversal on tyrosine codons: slower elongation provides enough time for proper folding of synthesized proteins and prevents cellular aggregation of tyrosine-rich proteins It is not required for incorporation of RPL3 into ribosomes.

Its subcellular location is the nucleus. It localises to the nucleolus. It is found in the cytoplasm. In terms of biological role, component of the large ribosomal subunit. The ribosome is a large ribonucleoprotein complex responsible for the synthesis of proteins in the cell. The protein is Large ribosomal subunit protein uL3 (RPL3) of Macaca fascicularis (Crab-eating macaque).